We begin with the raw amino-acid sequence, 664 residues long: UvrABC system protein B (664 aa).

Positions 24–182 constitute a Helicase ATP-binding domain; it reads AGLRAGYRHQ…QLIDLQFERN (159 aa). 37–44 is an ATP binding site; that stretch reads GATGTGKT. The Beta-hairpin motif lies at 90–113; the sequence is YYDEYTPEAYVPSKDLYIEKEASI. A Helicase C-terminal domain is found at 427–593; it reads QIDDLLGEIR…GIAKGVRDLT (167 aa). Residues 624–659 form the UVR domain; sequence LKLIKDLEKQMKQAAKALAFEKAAALRDQIVELRQA.

The protein belongs to the UvrB family. In terms of assembly, forms a heterotetramer with UvrA during the search for lesions. Interacts with UvrC in an incision complex.

The protein resides in the cytoplasm. In terms of biological role, the UvrABC repair system catalyzes the recognition and processing of DNA lesions. A damage recognition complex composed of 2 UvrA and 2 UvrB subunits scans DNA for abnormalities. Upon binding of the UvrA(2)B(2) complex to a putative damaged site, the DNA wraps around one UvrB monomer. DNA wrap is dependent on ATP binding by UvrB and probably causes local melting of the DNA helix, facilitating insertion of UvrB beta-hairpin between the DNA strands. Then UvrB probes one DNA strand for the presence of a lesion. If a lesion is found the UvrA subunits dissociate and the UvrB-DNA preincision complex is formed. This complex is subsequently bound by UvrC and the second UvrB is released. If no lesion is found, the DNA wraps around the other UvrB subunit that will check the other stand for damage. In Chloroflexus aggregans (strain MD-66 / DSM 9485), this protein is UvrABC system protein B.